The chain runs to 140 residues: Cysteine desulfuration protein SufE (140 aa).

The active-site Cysteine persulfide intermediate is the cysteine 51.

It belongs to the SufE family. In terms of assembly, homodimer. Interacts with SufS.

The protein localises to the cytoplasm. The protein operates within cofactor biosynthesis; iron-sulfur cluster biosynthesis. Participates in cysteine desulfuration mediated by SufS. Cysteine desulfuration mobilizes sulfur from L-cysteine to yield L-alanine and constitutes an essential step in sulfur metabolism for biosynthesis of a variety of sulfur-containing biomolecules. Functions as a sulfur acceptor for SufS, by mediating the direct transfer of the sulfur atom from the S-sulfanylcysteine of SufS, an intermediate product of cysteine desulfuration process. The chain is Cysteine desulfuration protein SufE from Yersinia pseudotuberculosis serotype O:1b (strain IP 31758).